The primary structure comprises 546 residues: CTP synthase (546 aa).

The tract at residues 1 to 266 (MTTNYIFVTG…DDLVCARFGI (266 aa)) is amidoligase domain. Residue S14 participates in CTP binding. S14 provides a ligand contact to UTP. ATP-binding positions include 15-20 (SLGKGI) and D72. Positions 72 and 140 each coordinate Mg(2+). CTP contacts are provided by residues 147–149 (DIE), 187–192 (KTKPTQ), and K223. UTP is bound by residues 187 to 192 (KTKPTQ) and K223. Residue 239–241 (KDV) coordinates ATP. A Glutamine amidotransferase type-1 domain is found at 291 to 542 (TIGMVGKYIE…VKAAGQNARG (252 aa)). Position 352 (G352) interacts with L-glutamine. C379 functions as the Nucleophile; for glutamine hydrolysis in the catalytic mechanism. L-glutamine contacts are provided by residues 380–383 (LGMQ), E403, and R470. Catalysis depends on residues H515 and E517.

Belongs to the CTP synthase family. Homotetramer.

It catalyses the reaction UTP + L-glutamine + ATP + H2O = CTP + L-glutamate + ADP + phosphate + 2 H(+). It carries out the reaction L-glutamine + H2O = L-glutamate + NH4(+). The catalysed reaction is UTP + NH4(+) + ATP = CTP + ADP + phosphate + 2 H(+). Its pathway is pyrimidine metabolism; CTP biosynthesis via de novo pathway; CTP from UDP: step 2/2. Allosterically activated by GTP, when glutamine is the substrate; GTP has no effect on the reaction when ammonia is the substrate. The allosteric effector GTP functions by stabilizing the protein conformation that binds the tetrahedral intermediate(s) formed during glutamine hydrolysis. Inhibited by the product CTP, via allosteric rather than competitive inhibition. Functionally, catalyzes the ATP-dependent amination of UTP to CTP with either L-glutamine or ammonia as the source of nitrogen. Regulates intracellular CTP levels through interactions with the four ribonucleotide triphosphates. This is CTP synthase from Vibrio campbellii (strain ATCC BAA-1116).